Here is a 218-residue protein sequence, read N- to C-terminus: MTDSRIDFRQAKFLISAPDIAHLDEHLPGDVGVEIAFAGRSNAGKSSALNQLTEQKNLARTSKTPGRTQLINVFALDEHRRLVDLPGYGFAQVPLAMKKKWQQALGQYLQERACLSGLVVLMDIRHPLKDLDMQMIEWAVDCDIPVLALLTKCDKLAQSARMKTVNDVRKALADFGDGVKVEPFSSLKGTGKPKVLGILNEWCHPDWLVEALADAEQE.

The 175-residue stretch at 31-205 (VGVEIAFAGR…LGILNEWCHP (175 aa)) folds into the EngB-type G domain. GTP contacts are provided by residues 39–46 (GRSNAGKS), 66–70 (GRTQL), 84–87 (DLPG), 151–154 (TKCD), and 184–186 (FSS). The Mg(2+) site is built by Ser-46 and Thr-68.

Belongs to the TRAFAC class TrmE-Era-EngA-EngB-Septin-like GTPase superfamily. EngB GTPase family. Requires Mg(2+) as cofactor.

Functionally, necessary for normal cell division and for the maintenance of normal septation. The chain is Probable GTP-binding protein EngB from Shewanella loihica (strain ATCC BAA-1088 / PV-4).